The chain runs to 550 residues: U-box domain-containing protein 40 (550 aa).

Residues 19–29 (KSDNLSRRESL) are compositionally biased toward basic and acidic residues. The tract at residues 19–55 (KSDNLSRRESLAGKSKWRTSLSRSSSSSSSNNNSPTK) is disordered. Low complexity predominate over residues 38–52 (SLSRSSSSSSSNNNS). The U-box domain maps to 57 to 127 (EIPAEFLCPI…HSWCERRCFP (71 aa)). ARM repeat units lie at residues 260-299 (ESSR…NLSL), 301-340 (KSNK…SLAL), 342-381 (DENK…HLSL), 383-420 (QSNR…NMAS), and 422-464 (PVSR…GLSH).

The enzyme catalyses S-ubiquitinyl-[E2 ubiquitin-conjugating enzyme]-L-cysteine + [acceptor protein]-L-lysine = [E2 ubiquitin-conjugating enzyme]-L-cysteine + N(6)-ubiquitinyl-[acceptor protein]-L-lysine.. Its pathway is protein modification; protein ubiquitination. In terms of biological role, functions as an E3 ubiquitin ligase. In Arabidopsis thaliana (Mouse-ear cress), this protein is U-box domain-containing protein 40 (PUB40).